Here is a 499-residue protein sequence, read N- to C-terminus: MAEKLMKYSEAVKEFDPVIGLETHVELSTRTKLFCPAPISFGAEPNTELTPVSLGLPGSLPVLNATAVDYAIKLGLALHCQINEWSQFSRKNYFYPDMPRDYQISQYDKPTNGEGYLDVELEDGSVFRVPIERAHIEDDAGKNTHVGGADGRIEGADHSLVDYNRAGVPLIEIVTKPITGVGDRGPEIAGAYMRAIRDIVRALNISHARMEQGNMRADVNVSLRRSPDDPFGTRSETKNVNSFRGIERTVQYEIRRQAAILNDGGEILQETRHWDEASQATAGGRVKSDADDYRYFPDPDLVMLHITPEHIERLKAEMPEMPRERRNRLKAEWKFSDVEMRDVINADALDLIEETVKLGASPAGAKKWWLGELSREANAKGISLEELPINAQEVADVEKLIAEGKLNDKLAKQTVALVLKGEGTPAEIVEKHGFKVVSDDGMLQTAVDEAMAANPDVVEKLRSGNMKPMGAIIGAVMRATKGQADAKAVTKIVMEKIKG.

It belongs to the GatB/GatE family. GatB subfamily. In terms of assembly, heterotrimer of A, B and C subunits.

The catalysed reaction is L-glutamyl-tRNA(Gln) + L-glutamine + ATP + H2O = L-glutaminyl-tRNA(Gln) + L-glutamate + ADP + phosphate + H(+). It carries out the reaction L-aspartyl-tRNA(Asn) + L-glutamine + ATP + H2O = L-asparaginyl-tRNA(Asn) + L-glutamate + ADP + phosphate + 2 H(+). Functionally, allows the formation of correctly charged Asn-tRNA(Asn) or Gln-tRNA(Gln) through the transamidation of misacylated Asp-tRNA(Asn) or Glu-tRNA(Gln) in organisms which lack either or both of asparaginyl-tRNA or glutaminyl-tRNA synthetases. The reaction takes place in the presence of glutamine and ATP through an activated phospho-Asp-tRNA(Asn) or phospho-Glu-tRNA(Gln). In Bifidobacterium animalis subsp. lactis (strain AD011), this protein is Aspartyl/glutamyl-tRNA(Asn/Gln) amidotransferase subunit B.